A 285-amino-acid chain; its full sequence is ATP synthase gamma chain (285 aa).

It belongs to the ATPase gamma chain family. As to quaternary structure, F-type ATPases have 2 components, CF(1) - the catalytic core - and CF(0) - the membrane proton channel. CF(1) has five subunits: alpha(3), beta(3), gamma(1), delta(1), epsilon(1). CF(0) has three main subunits: a, b and c.

The protein localises to the cell inner membrane. In terms of biological role, produces ATP from ADP in the presence of a proton gradient across the membrane. The gamma chain is believed to be important in regulating ATPase activity and the flow of protons through the CF(0) complex. The sequence is that of ATP synthase gamma chain from Protochlamydia amoebophila (strain UWE25).